We begin with the raw amino-acid sequence, 123 residues long: Small ribosomal subunit protein uS13 (123 aa).

Positions 95-123 are disordered; it reads GLPVRGQRTKTNARTRKGPARTVAGKKKK.

Belongs to the universal ribosomal protein uS13 family. As to quaternary structure, part of the 30S ribosomal subunit. Forms a loose heterodimer with protein S19. Forms two bridges to the 50S subunit in the 70S ribosome.

Located at the top of the head of the 30S subunit, it contacts several helices of the 16S rRNA. In the 70S ribosome it contacts the 23S rRNA (bridge B1a) and protein L5 of the 50S subunit (bridge B1b), connecting the 2 subunits; these bridges are implicated in subunit movement. Contacts the tRNAs in the A and P-sites. The chain is Small ribosomal subunit protein uS13 from Heliobacterium modesticaldum (strain ATCC 51547 / Ice1).